The following is a 312-amino-acid chain: Olfactory receptor 51B6 (312 aa).

At 1-23 the chain is on the extracellular side; that stretch reads MGLNKSASTFQLTGFPGMEKAHH. N-linked (GlcNAc...) asparagine glycosylation occurs at N4. Residues 24–44 traverse the membrane as a helical segment; the sequence is WIFIPLLAAYISILLGNGTLL. Residues 45–52 lie on the Cytoplasmic side of the membrane; it reads FLIRNDHN. A helical transmembrane segment spans residues 53 to 73; it reads LHEPMYYFLAMLAATDLGVTL. Residues 74–97 lie on the Extracellular side of the membrane; it reads TTMPTVLGVLWLDHREIGHGACFS. C95 and C187 form a disulfide bridge. Residues 98–118 traverse the membrane as a helical segment; that stretch reads QAYFIHTLSVMESGVLLAMAY. The Cytoplasmic portion of the chain corresponds to 119–137; sequence DCFITIRSPLRYTSILTNT. The helical transmembrane segment at 138–158 threads the bilayer; the sequence is QVMKIGVRVLTRAGLSIMPIV. Over 159 to 194 the chain is Extracellular; sequence VRLHWFPYCRSHVLSHAFCLHQDVIKLACADITFNR. Residues 195–215 form a helical membrane-spanning segment; sequence LYPVVVLFAMVLLDFLIIFFS. The Cytoplasmic segment spans residues 216 to 235; sequence YILILKTVMGIGSGGERAKA. The chain crosses the membrane as a helical span at residues 236 to 256; that stretch reads LNTCVSHICCILVFYVTVVCL. The Extracellular segment spans residues 257–271; that stretch reads TFIHRFGKHVPHVVH. The helical transmembrane segment at 272-292 threads the bilayer; it reads ITMSYIHFLFPPFMNPFIYSI. The Cytoplasmic portion of the chain corresponds to 293–312; it reads KTKQIQSGILRLFSLPHSRA.

This sequence belongs to the G-protein coupled receptor 1 family.

The protein localises to the cell membrane. In terms of biological role, odorant receptor. The chain is Olfactory receptor 51B6 (OR51B6) from Homo sapiens (Human).